We begin with the raw amino-acid sequence, 1101 residues long: ATP-dependent DNA helicase mph1 (1101 aa).

Disordered regions lie at residues Pro-22–Arg-59, Leu-95–Asp-138, Phe-154–Pro-231, and Ser-250–His-270. Residues Thr-24–Gly-48 are compositionally biased toward polar residues. Residues Thr-170 to Pro-190 show a composition bias toward low complexity. Residues Phe-191–Asp-202 are compositionally biased toward acidic residues. Positions Pro-209–Thr-228 are enriched in polar residues. Residues Ile-296–Lys-464 enclose the Helicase ATP-binding domain. ATP is bound at residue Leu-309–Thr-316. A DEAH box motif is present at residues Asp-412–His-415. Residues Tyr-634–Lys-808 form the Helicase C-terminal domain. 2 disordered regions span residues Arg-824 to Glu-890 and Ser-991 to Phe-1067. The segment covering Arg-842–Phe-854 has biased composition (basic residues).

Belongs to the DEAD box helicase family. DEAH subfamily. FANCM sub-subfamily. As to quaternary structure, interacts with the MHF histone-fold complex to form the FANCM-MHF complex.

It is found in the nucleus. The enzyme catalyses ATP + H2O = ADP + phosphate + H(+). Functionally, ATP-dependent DNA helicase involved in DNA damage repair by homologous recombination and in genome maintenance. Capable of unwinding D-loops. Plays a role in limiting crossover recombinants during mitotic DNA double-strand break (DSB) repair. Component of a FANCM-MHF complex which promotes gene conversion at blocked replication forks, probably by reversal of the stalled fork. The sequence is that of ATP-dependent DNA helicase mph1 from Aspergillus fumigatus (strain CBS 144.89 / FGSC A1163 / CEA10) (Neosartorya fumigata).